We begin with the raw amino-acid sequence, 333 residues long: Probable tRNA pseudouridine synthase B (333 aa).

The active-site Nucleophile is aspartate 66. In terms of domain architecture, PUA spans 233 to 308 (LKKIIVKDSA…EVVEITRVIM (76 aa)).

Belongs to the pseudouridine synthase TruB family. Type 2 subfamily.

The enzyme catalyses uridine(55) in tRNA = pseudouridine(55) in tRNA. Functionally, could be responsible for synthesis of pseudouridine from uracil-55 in the psi GC loop of transfer RNAs. The polypeptide is Probable tRNA pseudouridine synthase B (Methanococcus maripaludis (strain C5 / ATCC BAA-1333)).